The chain runs to 382 residues: MRYLTAGESHGPQLTAIIEGLPAQLPLGKADIDPWLRKRQGGYGRGRRMVIETDEAELLSGVRAGRTTGAPVTLAIQNKDHRNWTEIMSPEPGGEPRKKALTDARPGHADLTGGIKYRHKDLRDVLERASARETAARVAVGSIALKLLSELGIEGANYVFNLAGIETRQAFSWDALDAIEDSDLRTPDADAAAQMRERIDQAKKDGDTLGGILEVRFRGLPVGLGSFVHYDRKLDGKIAQACLSVQAMKGVEIGRAFENAVKPGSGVHDAIHYREGTYARDTNGAGGLEAGMTNGEELIVRVAMKPIATLMKPLPTVNVVTHEASDAARERSDTTAVPAAGVILQCVIGWVLAEAITEKFGGDTLPELQERLAAARRYAAEY.

Residues arginine 39 and arginine 45 each coordinate NADP(+). The tract at residues serine 89–glycine 113 is disordered. Over residues glycine 94 to histidine 108 the composition is skewed to basic and acidic residues. FMN contacts are provided by residues arginine 128–serine 130, glutamine 246–alanine 247, alanine 290, lysine 305–threonine 309, and arginine 331.

This sequence belongs to the chorismate synthase family. In terms of assembly, homotetramer. FMNH2 is required as a cofactor.

It carries out the reaction 5-O-(1-carboxyvinyl)-3-phosphoshikimate = chorismate + phosphate. It functions in the pathway metabolic intermediate biosynthesis; chorismate biosynthesis; chorismate from D-erythrose 4-phosphate and phosphoenolpyruvate: step 7/7. Catalyzes the anti-1,4-elimination of the C-3 phosphate and the C-6 proR hydrogen from 5-enolpyruvylshikimate-3-phosphate (EPSP) to yield chorismate, which is the branch point compound that serves as the starting substrate for the three terminal pathways of aromatic amino acid biosynthesis. This reaction introduces a second double bond into the aromatic ring system. This Deinococcus radiodurans (strain ATCC 13939 / DSM 20539 / JCM 16871 / CCUG 27074 / LMG 4051 / NBRC 15346 / NCIMB 9279 / VKM B-1422 / R1) protein is Chorismate synthase.